The sequence spans 366 residues: UDP-N-acetylglucosamine--N-acetylmuramyl-(pentapeptide) pyrophosphoryl-undecaprenol N-acetylglucosamine transferase (366 aa).

Residues 14–16 (TGG), N125, R168, S196, and Q297 contribute to the UDP-N-acetyl-alpha-D-glucosamine site.

The protein belongs to the glycosyltransferase 28 family. MurG subfamily.

It localises to the cell inner membrane. The catalysed reaction is di-trans,octa-cis-undecaprenyl diphospho-N-acetyl-alpha-D-muramoyl-L-alanyl-D-glutamyl-meso-2,6-diaminopimeloyl-D-alanyl-D-alanine + UDP-N-acetyl-alpha-D-glucosamine = di-trans,octa-cis-undecaprenyl diphospho-[N-acetyl-alpha-D-glucosaminyl-(1-&gt;4)]-N-acetyl-alpha-D-muramoyl-L-alanyl-D-glutamyl-meso-2,6-diaminopimeloyl-D-alanyl-D-alanine + UDP + H(+). It participates in cell wall biogenesis; peptidoglycan biosynthesis. Its function is as follows. Cell wall formation. Catalyzes the transfer of a GlcNAc subunit on undecaprenyl-pyrophosphoryl-MurNAc-pentapeptide (lipid intermediate I) to form undecaprenyl-pyrophosphoryl-MurNAc-(pentapeptide)GlcNAc (lipid intermediate II). This chain is UDP-N-acetylglucosamine--N-acetylmuramyl-(pentapeptide) pyrophosphoryl-undecaprenol N-acetylglucosamine transferase, found in Rhodopseudomonas palustris (strain HaA2).